Consider the following 369-residue polypeptide: Choline-phosphate cytidylyltransferase B (369 aa).

The segment at 1–27 (MPVLTTDAESETGIPKSLSNEPPSETM) is disordered. CTP contacts are provided by Ile84, Phe85, His92, and Lys122. The phosphocholine site is built by Lys122 and Trp151. His168, Asp169, Tyr173, Gln195, Arg196, Thr197, and Ile200 together coordinate CTP. The disordered stretch occupies residues 309–369 (RMLQALSPKQ…SMSEGDEDEK (61 aa)). Residues Ser315, Ser319, Ser322, Ser323, Ser329, Ser331, and Ser335 each carry the phosphoserine modification. The segment covering 319 to 339 (SPVSSPTRSRSPSRSPSPTFS) has biased composition (low complexity). Thr345 carries the phosphothreonine modification. Phosphoserine is present on residues Ser346, Ser349, Ser350, Ser355, Ser360, and Ser362. Residues 351–362 (PKAASASISSMS) are compositionally biased toward low complexity.

This sequence belongs to the cytidylyltransferase family. As to quaternary structure, homodimer. Highly expressed in brain (at protein level). Expressed in liver (at protein level). Expressed at lower levels in lung and gonads. In terms of tissue distribution, expressed in brain (at protein level). Expressed at lower levels in lung and gonads.

The protein localises to the endoplasmic reticulum. The protein resides in the cytoplasm. The catalysed reaction is phosphocholine + CTP + H(+) = CDP-choline + diphosphate. Its pathway is phospholipid metabolism; phosphatidylcholine biosynthesis; phosphatidylcholine from phosphocholine: step 1/2. Functionally, catalyzes the key rate-limiting step in the CDP-choline pathway for phosphatidylcholine biosynthesis. Plays an important role in ovary maturation and the maintenance of sperm production. Catalyzes the key rate-limiting step in the CDP-choline pathway for phosphatidylcholine biosynthesis. The protein is Choline-phosphate cytidylyltransferase B (Pcyt1b) of Mus musculus (Mouse).